A 314-amino-acid polypeptide reads, in one-letter code: tRNA dimethylallyltransferase (314 aa).

The disordered stretch occupies residues 1–25 (MAEEPQRSPAPTSPFAFTVPSNSLS). 40–47 (GPTASGKS) is an ATP binding site. 42–47 (TASGKS) lines the substrate pocket.

This sequence belongs to the IPP transferase family. In terms of assembly, monomer. Requires Mg(2+) as cofactor.

The enzyme catalyses adenosine(37) in tRNA + dimethylallyl diphosphate = N(6)-dimethylallyladenosine(37) in tRNA + diphosphate. Catalyzes the transfer of a dimethylallyl group onto the adenine at position 37 in tRNAs that read codons beginning with uridine, leading to the formation of N6-(dimethylallyl)adenosine (i(6)A). The chain is tRNA dimethylallyltransferase from Cereibacter sphaeroides (strain ATCC 17023 / DSM 158 / JCM 6121 / CCUG 31486 / LMG 2827 / NBRC 12203 / NCIMB 8253 / ATH 2.4.1.) (Rhodobacter sphaeroides).